The sequence spans 128 residues: Large ribosomal subunit protein bL12 (128 aa).

The protein belongs to the bacterial ribosomal protein bL12 family. In terms of assembly, homodimer. Part of the ribosomal stalk of the 50S ribosomal subunit. Forms a multimeric L10(L12)X complex, where L10 forms an elongated spine to which 2 to 4 L12 dimers bind in a sequential fashion. Binds GTP-bound translation factors.

Functionally, forms part of the ribosomal stalk which helps the ribosome interact with GTP-bound translation factors. Is thus essential for accurate translation. This Streptomyces antibioticus protein is Large ribosomal subunit protein bL12.